The sequence spans 394 residues: S-adenosylmethionine synthase 3 (394 aa).

Residue Glu11 coordinates Mg(2+). Position 17 (His17) interacts with ATP. Position 45 (Glu45) interacts with K(+). Glu58 and Gln101 together coordinate L-methionine. ATP contacts are provided by residues 169–171, 237–240, Asp248, 254–255, Ala271, Lys275, and Lys279; these read DGK, SGRF, and RK. Asp248 serves as a coordination point for L-methionine. Position 279 (Lys279) interacts with L-methionine.

It belongs to the AdoMet synthase family. In terms of assembly, homotetramer. Mn(2+) is required as a cofactor. The cofactor is Mg(2+). Requires Co(2+) as cofactor. K(+) serves as cofactor.

It is found in the cytoplasm. It carries out the reaction L-methionine + ATP + H2O = S-adenosyl-L-methionine + phosphate + diphosphate. It participates in amino-acid biosynthesis; S-adenosyl-L-methionine biosynthesis; S-adenosyl-L-methionine from L-methionine: step 1/1. Functionally, catalyzes the formation of S-adenosylmethionine from methionine and ATP. The reaction comprises two steps that are both catalyzed by the same enzyme: formation of S-adenosylmethionine (AdoMet) and triphosphate, and subsequent hydrolysis of the triphosphate. In Hordeum vulgare (Barley), this protein is S-adenosylmethionine synthase 3 (SAM3).